The sequence spans 382 residues: Chaperone protein DnaJ (382 aa).

One can recognise a J domain in the interval 5–70 (DYYEVLGVSR…DKKAAYDRYG (66 aa)). The segment at 141-219 (GVQKTINVPA…CHGAGRVEKE (79 aa)) adopts a CR-type zinc-finger fold. 8 residues coordinate Zn(2+): cysteine 154, cysteine 157, cysteine 171, cysteine 174, cysteine 193, cysteine 196, cysteine 207, and cysteine 210. CXXCXGXG motif repeat units lie at residues 154-161 (CDACKGTG), 171-178 (CPTCSGMG), 193-200 (CPTCNGMG), and 207-214 (CKVCHGAG).

This sequence belongs to the DnaJ family. In terms of assembly, homodimer. Requires Zn(2+) as cofactor.

Its subcellular location is the cytoplasm. Its function is as follows. Participates actively in the response to hyperosmotic and heat shock by preventing the aggregation of stress-denatured proteins and by disaggregating proteins, also in an autonomous, DnaK-independent fashion. Unfolded proteins bind initially to DnaJ; upon interaction with the DnaJ-bound protein, DnaK hydrolyzes its bound ATP, resulting in the formation of a stable complex. GrpE releases ADP from DnaK; ATP binding to DnaK triggers the release of the substrate protein, thus completing the reaction cycle. Several rounds of ATP-dependent interactions between DnaJ, DnaK and GrpE are required for fully efficient folding. Also involved, together with DnaK and GrpE, in the DNA replication of plasmids through activation of initiation proteins. This Cereibacter sphaeroides (strain ATCC 17023 / DSM 158 / JCM 6121 / CCUG 31486 / LMG 2827 / NBRC 12203 / NCIMB 8253 / ATH 2.4.1.) (Rhodobacter sphaeroides) protein is Chaperone protein DnaJ.